An 81-amino-acid polypeptide reads, in one-letter code: Protein Vpu (81 aa).

The Extracellular segment spans residues 1-6 (MQPIQI). Residues 7–27 (AIVALVVAIIIAIVVWSIVII) form a helical membrane-spanning segment. Residues 28-81 (EYRKILRQRKIDRLIDRLIERAEDSGNESEGEISALVEMGVEMGHHAPWDVDDL) are Cytoplasmic-facing. Phosphoserine; by host CK2 occurs at positions 52 and 56.

It belongs to the HIV-1 VPU protein family. Homopentamer. Interacts with host CD4 and BRTC; these interactions induce proteasomal degradation of CD4. Interacts with host BST2; this interaction leads to the degradation of host BST2. Interacts with host FBXW11. Interacts with host AP1M1; this interaction plays a role in the mistrafficking and subsequent degradation of host BST2. Interacts with host RANBP2; this interaction allows Vpu to down-regulate host BLM sumoylation. In terms of processing, phosphorylated by host CK2. This phosphorylation is necessary for interaction with human BTRC and degradation of CD4.

Its subcellular location is the host membrane. Ion channel activity is inhibited by hexamethylene amiloride in vitro. Its function is as follows. Enhances virion budding by targeting host CD4 and Tetherin/BST2 to proteasome degradation. Degradation of CD4 prevents any unwanted premature interactions between viral Env and its host receptor CD4 in the endoplasmic reticulum. Degradation of antiretroviral protein Tetherin/BST2 is important for virion budding, as BST2 tethers new viral particles to the host cell membrane. Mechanistically, Vpu bridges either CD4 or BST2 to BTRC, a substrate recognition subunit of the Skp1/Cullin/F-box protein E3 ubiquitin ligase, induces their ubiquitination and subsequent proteasomal degradation. The alteration of the E3 ligase specificity by Vpu seems to promote the degradation of host IKBKB, leading to NF-kappa-B down-regulation and subsequent apoptosis. Acts as a viroporin that forms an oligomeric ion channel in membranes. Modulates the host DNA repair mechanisms to promote degradation of nuclear viral cDNA in cells that are already productively infected in order to suppress immune sensing and proviral hyper-integration (superinfection). Manipulates PML-NBs and modulates SUMOylation of host BLM protein thereby enhancing its DNA-end processing activity toward viral unintegrated linear DNA. Also inhibits RAD52-mediated homologous repair of viral cDNA, preventing the generation of dead-end circular forms of single copies of the long terminal repeat and permitting sustained nucleolytic attack. The protein is Protein Vpu of Human immunodeficiency virus type 1 group M subtype B (isolate BH10) (HIV-1).